Here is a 72-residue protein sequence, read N- to C-terminus: Crustacean hyperglycemic hormone A (72 aa).

A Pyrrolidone carboxylic acid modification is found at Gln1. D-phenylalanine; in form CHHA-II is present on Phe3. Intrachain disulfides connect Cys7–Cys43, Cys23–Cys39, and Cys26–Cys52. Val72 bears the Valine amide mark.

In terms of processing, stereoinversion of L-Phe (in CHHA-I) to D-Phe (in CHHA-II).

The protein localises to the secreted. Hormone found in the sinus gland of isopods and decapods which controls the blood sugar level. Has a secretagogue action over the amylase released from the midgut gland. May act as a stress hormone and may be involved in the control of molting and reproduction. The sequence is that of Crustacean hyperglycemic hormone A from Cherax destructor (Common yabby crayfish).